The primary structure comprises 475 residues: tRNA modification GTPase MnmE (475 aa).

(6S)-5-formyl-5,6,7,8-tetrahydrofolate contacts are provided by R32, E97, and K136. The TrmE-type G domain maps to 232–396 (GVATVIAGRP…LKSRMSSMVE (165 aa)). Residues 242–247 (NAGKST), 261–267 (SHMPGTT), 286–289 (DTAG), and 377–379 (SAR) contribute to the GTP site. The Mg(2+) site is built by S246 and T267. K475 provides a ligand contact to (6S)-5-formyl-5,6,7,8-tetrahydrofolate.

The protein belongs to the TRAFAC class TrmE-Era-EngA-EngB-Septin-like GTPase superfamily. TrmE GTPase family. In terms of assembly, homodimer. Heterotetramer of two MnmE and two MnmG subunits. The cofactor is K(+).

Its subcellular location is the cytoplasm. In terms of biological role, exhibits a very high intrinsic GTPase hydrolysis rate. Involved in the addition of a carboxymethylaminomethyl (cmnm) group at the wobble position (U34) of certain tRNAs, forming tRNA-cmnm(5)s(2)U34. The polypeptide is tRNA modification GTPase MnmE (Chlorobium phaeobacteroides (strain DSM 266 / SMG 266 / 2430)).